The chain runs to 198 residues: Ribonuclease HII 1 (198 aa).

The 190-residue stretch at 7 to 196 folds into the RNase H type-2 domain; that stretch reads ELTAGVDEAG…VRAALARAAA (190 aa). A divalent metal cation-binding residues include Asp-13, Glu-14, and Asp-105.

The protein belongs to the RNase HII family. Mn(2+) serves as cofactor. Mg(2+) is required as a cofactor.

The protein resides in the cytoplasm. The catalysed reaction is Endonucleolytic cleavage to 5'-phosphomonoester.. In terms of biological role, endonuclease that specifically degrades the RNA of RNA-DNA hybrids. The protein is Ribonuclease HII 1 of Methylibium petroleiphilum (strain ATCC BAA-1232 / LMG 22953 / PM1).